The primary structure comprises 423 residues: E3 ubiquitin-protein ligase makorin-2 (423 aa).

2 consecutive C3H1-type zinc fingers follow at residues 2–29 and 31–58; these read STKQ…HDLN and SKPS…HIKP. A disordered region spans residues 59 to 90; it reads SSRGGGGGAPEDQAGGGGAGGGGAGIGGAGGG. Residues 61 to 90 show a composition bias toward gly residues; it reads RGGGGGAPEDQAGGGGAGGGGAGIGGAGGG. The segment at 162-189 adopts a C3H1-type 3 zinc-finger fold; sequence QNLPQLCPYAANGHCFYEENCTYLHGDL. Positions 190–219 are makorin-type Cys-His; sequence CEVCGLQVLHPHDSEQRRAHEKMCLAAFEA. Residues 235-289 form an RING-type zinc finger; sequence CSICMEVVVQKANPSDRRFGILSSCCHTFCLACIRKWRCTRTFSNTIIKSCPECR. The C3H1-type 4 zinc-finger motif lies at 318–347; that stretch reads GVSKKACKYFDQGRGSCPFGGKCLYLHAFP.

Its subcellular location is the cytoplasm. It localises to the nucleus. The enzyme catalyses S-ubiquitinyl-[E2 ubiquitin-conjugating enzyme]-L-cysteine + [acceptor protein]-L-lysine = [E2 ubiquitin-conjugating enzyme]-L-cysteine + N(6)-ubiquitinyl-[acceptor protein]-L-lysine.. It functions in the pathway protein modification; protein ubiquitination. In terms of biological role, E3 ubiquitin ligase catalyzing the covalent attachment of ubiquitin moieties onto substrate proteins. Inhibits neurogenesis and axis formation during embryonic development by modulating the phosphatidylinositol 3-kinase (PI3K) pathway. Acts downstream of PI3K and akt1 to up-regulate gsk3b mRNA expression. This chain is E3 ubiquitin-protein ligase makorin-2 (mkrn2), found in Seriola quinqueradiata (Five-ray yellowtail).